A 100-amino-acid polypeptide reads, in one-letter code: MITKEEAQKIAKLARLKFEKDIVEKFSTQLSTIMNMINILNEIDCKDIEPLTSVSNMNARMREDTVTSSDLSNKLFDNVSGNSARLAKEVKYFITPKVVE.

It belongs to the GatC family. As to quaternary structure, heterotrimer of A, B and C subunits.

The enzyme catalyses L-glutamyl-tRNA(Gln) + L-glutamine + ATP + H2O = L-glutaminyl-tRNA(Gln) + L-glutamate + ADP + phosphate + H(+). It catalyses the reaction L-aspartyl-tRNA(Asn) + L-glutamine + ATP + H2O = L-asparaginyl-tRNA(Asn) + L-glutamate + ADP + phosphate + 2 H(+). In terms of biological role, allows the formation of correctly charged Asn-tRNA(Asn) or Gln-tRNA(Gln) through the transamidation of misacylated Asp-tRNA(Asn) or Glu-tRNA(Gln) in organisms which lack either or both of asparaginyl-tRNA or glutaminyl-tRNA synthetases. The reaction takes place in the presence of glutamine and ATP through an activated phospho-Asp-tRNA(Asn) or phospho-Glu-tRNA(Gln). This chain is Aspartyl/glutamyl-tRNA(Asn/Gln) amidotransferase subunit C, found in Rickettsia typhi (strain ATCC VR-144 / Wilmington).